A 68-amino-acid chain; its full sequence is Potassium channel toxin epsilon-KTx 1.2 (68 aa).

The signal sequence occupies residues 1–26 (MKFSCGFLLIFLVLSAMIATFSEVEA). 4 cysteine pairs are disulfide-bonded: C30–C38, C33–C54, C37–C47, and C42–C52. The residue at position 55 (Y55) is a Tyrosine amide. A propeptide spanning residues 57–68 (RSDLNEEFENYQ) is cleaved from the precursor.

The protein belongs to the short scorpion toxin superfamily. Potassium channel inhibitor family. Epsilon-KTx 01 subfamily. As to expression, expressed by the venom gland.

The protein resides in the secreted. In terms of biological role, potassium channel blocker. At 3 uM, this toxin blocks voltage-gated potassium channels rKv1.2/KCNA2 (5%), hKv1.3/KCNA3 (10%),rKv1.4/KCNA4 (20%), Kv11/hERG (24%), and Shaker-IR (27%). The protein is Potassium channel toxin epsilon-KTx 1.2 of Tityus serrulatus (Brazilian scorpion).